The chain runs to 359 residues: Short chain dehydrogenase resG (359 aa).

NADP(+)-binding residues include Lys87, Asp110, Asn137, Tyr237, and Lys241. Tyr237 acts as the Proton donor in catalysis. Lys241 functions as the Lowers pKa of active site Tyr in the catalytic mechanism.

This sequence belongs to the short-chain dehydrogenases/reductases (SDR) family.

It functions in the pathway antifungal biosynthesis. Its function is as follows. Short chain dehydrogenase; part of the gene cluster that mediates the biosynthesis of the tetrahydropyranyl antifungal agent restricticin that acts as an inhibitor of CYP51 and blocks the ergosterol biosynthesis. The highly reducing polyketide synthase resH, the short chain dehydrogenase resG, the cyclase resF, the FAD-dependent monooxygenase resA and the enoylreductase resD are required to generate the first stable intermediate desmethylrestrictinol. ResH with resD biosynthesize the first polyketide chain intermediate that is reduced by resG, followed by epoxidation by resA before 6-endo cyclization via epoxide opening by resF leads to desmethylrestrictinol. The methyltransferase resE then catalyzes the C4 O-methylation of desmethylrestrictinol to produce restrictinol, and the nonribosomal peptide synthetase resC catalyzes the C3 esterification of restrictinol with glycine that leads to restricticin. In Aspergillus sclerotiorum, this protein is Short chain dehydrogenase resG.